The following is a 315-amino-acid chain: Malate dehydrogenase (315 aa).

NAD(+) contacts are provided by residues 10 to 15 (GSGFTG) and D34. Substrate is bound by residues R85 and R91. NAD(+) contacts are provided by residues N98 and 121–123 (LTN). 2 residues coordinate substrate: N123 and R154. The Proton acceptor role is filled by H178.

This sequence belongs to the LDH/MDH superfamily. MDH type 3 family.

It catalyses the reaction (S)-malate + NAD(+) = oxaloacetate + NADH + H(+). Its function is as follows. Catalyzes the reversible oxidation of malate to oxaloacetate. This chain is Malate dehydrogenase, found in Symbiobacterium thermophilum (strain DSM 24528 / JCM 14929 / IAM 14863 / T).